Consider the following 215-residue polypeptide: 25 kDa ookinete surface antigen (215 aa).

The first 16 residues, Met1–Leu16, serve as a signal peptide directing secretion. One can recognise an EGF-like 1; truncated domain in the interval Cys29–Glu58. 3 consecutive EGF-like domains span residues Asn59–Val104, Val104–Thr148, and Gly151–Ile191. 9 disulfides stabilise this stretch: Cys63/Cys78, Cys72/Cys90, Cys92/Cys103, Cys108/Cys118, Cys113/Cys131, Cys133/Cys147, Cys155/Cys166, Cys159/Cys175, and Cys177/Cys190. N-linked (GlcNAc...) asparagine glycans are attached at residues Asn144 and Asn163. The GPI-anchor amidated serine moiety is linked to residue Ser192. Positions Phe193–Ile215 are cleaved as a propeptide — removed in mature form. The N-linked (GlcNAc...) asparagine glycan is linked to Asn200.

The protein resides in the cell membrane. In Plasmodium gallinaceum, this protein is 25 kDa ookinete surface antigen.